The chain runs to 296 residues: Indole-3-glycerol phosphate synthase (296 aa).

This sequence belongs to the TrpC family.

It catalyses the reaction 1-(2-carboxyphenylamino)-1-deoxy-D-ribulose 5-phosphate + H(+) = (1S,2R)-1-C-(indol-3-yl)glycerol 3-phosphate + CO2 + H2O. It participates in amino-acid biosynthesis; L-tryptophan biosynthesis; L-tryptophan from chorismate: step 4/5. The sequence is that of Indole-3-glycerol phosphate synthase from Microcystis aeruginosa (strain NIES-843 / IAM M-2473).